The primary structure comprises 416 residues: Putative UV-damage repair protein UvrX (416 aa).

In terms of domain architecture, UmuC spans isoleucine 12 to glycine 196. Mg(2+) contacts are provided by aspartate 16 and aspartate 115. Residue glutamate 116 is part of the active site.

It belongs to the DNA polymerase type-Y family. Requires Mg(2+) as cofactor.

This chain is Putative UV-damage repair protein UvrX (uvrX), found in Bacillus subtilis (strain 168).